The sequence spans 431 residues: 4-hydroxy-3-methylbut-2-en-1-yl diphosphate synthase (flavodoxin) (431 aa).

Positions 310, 313, 356, and 363 each coordinate [4Fe-4S] cluster.

It belongs to the IspG family. Requires [4Fe-4S] cluster as cofactor.

The enzyme catalyses (2E)-4-hydroxy-3-methylbut-2-enyl diphosphate + oxidized [flavodoxin] + H2O + 2 H(+) = 2-C-methyl-D-erythritol 2,4-cyclic diphosphate + reduced [flavodoxin]. Its pathway is isoprenoid biosynthesis; isopentenyl diphosphate biosynthesis via DXP pathway; isopentenyl diphosphate from 1-deoxy-D-xylulose 5-phosphate: step 5/6. Its function is as follows. Converts 2C-methyl-D-erythritol 2,4-cyclodiphosphate (ME-2,4cPP) into 1-hydroxy-2-methyl-2-(E)-butenyl 4-diphosphate. The protein is 4-hydroxy-3-methylbut-2-en-1-yl diphosphate synthase (flavodoxin) of Rhodopseudomonas palustris (strain HaA2).